A 336-amino-acid polypeptide reads, in one-letter code: tRNA N6-adenosine threonylcarbamoyltransferase (336 aa).

Fe cation contacts are provided by His-111 and His-115. Substrate-binding positions include 134–138 (LVSGG), Asp-167, Gly-180, and Asn-270. Asp-298 serves as a coordination point for Fe cation.

Belongs to the KAE1 / TsaD family. Fe(2+) serves as cofactor.

It localises to the cytoplasm. The catalysed reaction is L-threonylcarbamoyladenylate + adenosine(37) in tRNA = N(6)-L-threonylcarbamoyladenosine(37) in tRNA + AMP + H(+). Required for the formation of a threonylcarbamoyl group on adenosine at position 37 (t(6)A37) in tRNAs that read codons beginning with adenine. Is involved in the transfer of the threonylcarbamoyl moiety of threonylcarbamoyl-AMP (TC-AMP) to the N6 group of A37, together with TsaE and TsaB. TsaD likely plays a direct catalytic role in this reaction. This Acinetobacter baumannii (strain AB307-0294) protein is tRNA N6-adenosine threonylcarbamoyltransferase.